The sequence spans 619 residues: Eukaryotic translation initiation factor 2-alpha kinase 1 (619 aa).

Residues 1-40 are disordered; it reads MLGGSSVDGERDTDDDAAGAVAAPPAIDFPAEVSDPKYDE. Residues 18–28 are compositionally biased toward low complexity; the sequence is AGAVAAPPAID. Positions 85 to 104 match the SIFI-degron motif; the sequence is LHSKQVFKLLCQTFIKMGLL. The Protein kinase domain maps to 167–580; it reads FEELAILGKG…ALQLLQSELF (414 aa). ATP is bound by residues 173–181 and lysine 196; that span reads LGKGGYGRV. Threonine 283 bears the Phosphothreonine mark. An HRM 1 repeat occupies 408 to 413; that stretch reads ACPYVM. Residue aspartate 440 is the Proton acceptor of the active site. Threonine 483, threonine 485, and threonine 490 each carry phosphothreonine; by autocatalysis. One copy of the HRM 2 repeat lies at 549–554; it reads RCPVQA.

It belongs to the protein kinase superfamily. Ser/Thr protein kinase family. GCN2 subfamily. As to quaternary structure, synthesized in an inactive form that binds to the N-terminal domain of CDC37. Has to be associated with a multiprotein complex containing Hsp90, CDC37 and PPP5C for maturation and activation by autophosphorylation. The phosphatase PPP5C modulates this activation. Homodimer; homodimerizes in presence of heme, forming a disulfide-linked inactive homodimer. Interacts with DELE1; binds both to full-length DELE1 and processed form of DELE1 (S-DELE1) in response to stress, leading to activate its protein kinase activity and trigger the integrated stress response (ISR). Activated by autophosphorylation; phosphorylated predominantly on serine and threonine residues, but also on tyrosine residues. Autophosphorylation at Thr-485 is required for kinase activation. The active autophosphorylated form apparently is largely refractory to cellular heme fluctuations. In terms of processing, ubiquitinated and degraded by the SIFI complex once the mitochondrial stress has been resolved, thereby providing stress response silencing. Within the SIFI complex, UBR4 initiates ubiquitin chain that are further elongated or branched by KCMF1. Expressed predominantly in erythroid cells, mature reticulocytes, as well as fetal liver nucleated erythroid cells. At much lower levels, expressed in hepatocytes and bone marrow-derived macrophages (at protein level).

It localises to the cytoplasm. It carries out the reaction L-seryl-[protein] + ATP = O-phospho-L-seryl-[protein] + ADP + H(+). It catalyses the reaction L-threonyl-[protein] + ATP = O-phospho-L-threonyl-[protein] + ADP + H(+). With respect to regulation, in normal conditions, the protein kinase activity is inhibited; inhibition is relieved by various stress conditions. Inhibited by heme: in presence of heme, forms a disulfide-linked inactive homodimer. Heme depletion relieves inhibition and stimulates kinase activity by autophosphorylation. Inhibited by the heme metabolites biliverdin and bilirubin. Induced by oxidative stress generated by arsenite treatment. Binding of nitric oxide (NO) to the heme iron in the N-terminal heme-binding domain activates the kinase activity, while binding of carbon monoxide (CO) suppresses kinase activity. Protein kinase activity is also activated upon binding to DELE1 in response to various stress, triggering the integrated stress response (ISR): activated by full-length DELE1 in response to iron deficiency, while it is activated by the processed form of DELE1 (S-DELE1) in response to mitochondrial stress. Functionally, metabolic-stress sensing protein kinase that phosphorylates the alpha subunit of eukaryotic translation initiation factor 2 (EIF2S1/eIF-2-alpha) in response to various stress conditions. Key activator of the integrated stress response (ISR) required for adaptation to various stress, such as heme deficiency, oxidative stress, osmotic shock, mitochondrial dysfunction and heat shock. EIF2S1/eIF-2-alpha phosphorylation in response to stress converts EIF2S1/eIF-2-alpha in a global protein synthesis inhibitor, leading to a global attenuation of cap-dependent translation, while concomitantly initiating the preferential translation of ISR-specific mRNAs, such as the transcriptional activator ATF4, and hence allowing ATF4-mediated reprogramming. Acts as a key sensor of heme-deficiency: in normal conditions, binds hemin via a cysteine thiolate and histidine nitrogenous coordination, leading to inhibit the protein kinase activity. This binding occurs with moderate affinity, allowing it to sense the heme concentration within the cell: heme depletion relieves inhibition and stimulates kinase activity, activating the ISR. Thanks to this unique heme-sensing capacity, plays a crucial role to shut off protein synthesis during acute heme-deficient conditions. In red blood cells (RBCs), controls hemoglobin synthesis ensuring a coordinated regulation of the synthesis of its heme and globin moieties. It thereby plays an essential protective role for RBC survival in anemias of iron deficiency. Iron deficiency also triggers activation by full-length DELE1. Also activates the ISR in response to mitochondrial dysfunction: HRI/EIF2AK1 protein kinase activity is activated upon binding to the processed form of DELE1 (S-DELE1), thereby promoting the ATF4-mediated reprogramming. Also acts as an activator of mitophagy in response to mitochondrial damage: catalyzes phosphorylation of eIF-2-alpha (EIF2S1) following activation by S-DELE1, thereby promoting mitochondrial localization of EIF2S1, triggering PRKN-independent mitophagy. The polypeptide is Eukaryotic translation initiation factor 2-alpha kinase 1 (Mus musculus (Mouse)).